Here is a 1256-residue protein sequence, read N- to C-terminus: Pullulanase A (1256 aa).

The N-terminal stretch at 1–44 is a signal peptide; that stretch reads MRKTPSHTEKKMVYSIRSLKNGTGSVLIGASLVLLAMATPTISS. The disordered stretch occupies residues 42-117; sequence ISSDESTPTT…VTTETKAEEP (76 aa). Positions 48 to 61 are enriched in low complexity; sequence TPTTNEPNNRNTTT. Positions 79-90 are enriched in polar residues; sequence DISSPRNANASL. The segment covering 99–111 has biased composition (low complexity); that stretch reads TEPTTSTSPVTTE. Substrate contacts are provided by residues 141–143, tryptophan 153, aspartate 199, 248–250, tryptophan 261, lysine 303, and asparagine 308; these read WTW and WYW. Ca(2+) contacts are provided by serine 646 and tyrosine 648. Residues 652–653 and phenylalanine 728 each bind substrate; that span reads YD. Catalysis depends on aspartate 763, which acts as the Nucleophile. Glutamate 792 acts as the Proton donor in catalysis. Tryptophan 794 is a binding site for substrate. Residues methionine 813, threonine 816, and aspartate 817 each coordinate Ca(2+). Residues aspartate 824, arginine 827, and tyrosine 834 each contribute to the substrate site. Aspartate 867 and aspartate 871 together coordinate Ca(2+). Substrate is bound by residues asparagine 881, lysine 954, and 974–976; that span reads DSY. Aspartate 977 contacts Ca(2+). Residues 1126–1224 are disordered; that stretch reads SQNGTSHEST…TPDRQAELPN (99 aa). The segment covering 1134–1172 has biased composition (basic and acidic residues); sequence STAEEKPDSTPSKPEHQDPAPEARPDSTKPDAKVADAEN. Over residues 1181–1194 the composition is skewed to low complexity; sequence SQAEQPAQEAQASS. The segment covering 1200-1210 has biased composition (polar residues); it reads QNESVENSSKK. An LPXTG sorting signal motif is present at residues 1222 to 1226; the sequence is LPNTG. A Pentaglycyl murein peptidoglycan amidated threonine modification is found at threonine 1225. Positions 1226–1256 are cleaved as a propeptide — removed by sortase; the sequence is GIKNENKLLFAGISLLALLGLGFLLKNKKEN.

This sequence belongs to the glycosyl hydrolase 13 family.

The protein resides in the secreted. It is found in the cell wall. It localises to the cell surface. The enzyme catalyses Hydrolysis of (1-&gt;6)-alpha-D-glucosidic linkages in pullulan, amylopectin and glycogen, and in the alpha- and beta-limit dextrins of amylopectin and glycogen.. Its activity is regulated as follows. Inhibited by 4-O-alpha-D-glucopyranosylmoranoline (G1M). Virulence factor. Involved in the degradation of glycogen of the mammalian host cells. Hydrolyzes the alpha-1,6-branchpoints of glycogen. Hydrolyzes pullulan. Does not hydrolyze dextran. Binds to mouse lung alveolar type II cells that are rich in glycogen stores. Is an alpha-glucan-specific carbohydrate-binding protein, which binds to amylose (pure alpha-(1,4)-linked glucose), amylopectin (alpha-(1,4)-linked glucose with alpha-(1,6) branch points), pullulan (linear polymer of mixed alpha-(1,4)- and alpha-(1,6)-linked glucose) and glycogen (similar to amylopectin with more frequent alpha-(1,6) branch points) in vitro. Does not bind to dextran (a linear polymer of alpha-(1,6)-linked glucose). In Streptococcus pneumoniae serotype 2 (strain D39 / NCTC 7466), this protein is Pullulanase A.